A 444-amino-acid chain; its full sequence is Dihydroorotate dehydrogenase (quinone), mitochondrial (444 aa).

Residues 34 to 56 (GGASRYIIGTASVLVGAMAGFYI) form a helical membrane-spanning segment. Residues 124 to 128 (AGLDK) and Thr-148 contribute to the FMN site. Lys-128 is a binding site for substrate. 173–177 (NRYGF) serves as a coordination point for substrate. Positions 220 and 250 each coordinate FMN. 250–255 (NVSSPN) serves as a coordination point for substrate. Ser-253 acts as the Nucleophile in catalysis. 2 residues coordinate FMN: Lys-301 and Ser-329. Residue 330 to 331 (NT) participates in substrate binding. FMN-binding positions include Gly-355, Gly-385, and 406 to 407 (YT).

It belongs to the dihydroorotate dehydrogenase family. Type 2 subfamily. The cofactor is FMN.

The protein resides in the mitochondrion inner membrane. It catalyses the reaction (S)-dihydroorotate + a quinone = orotate + a quinol. It participates in pyrimidine metabolism; UMP biosynthesis via de novo pathway; orotate from (S)-dihydroorotate (quinone route): step 1/1. In terms of biological role, catalyzes the conversion of dihydroorotate to orotate with quinone as electron acceptor. The protein is Dihydroorotate dehydrogenase (quinone), mitochondrial (URA9) of Eremothecium gossypii (strain ATCC 10895 / CBS 109.51 / FGSC 9923 / NRRL Y-1056) (Yeast).